The chain runs to 1749 residues: MSDTKVKVAVRVRPMNRRELELNTKCVVEMEGNQTVLHPPPSNTKQGERKPPKVFAFDYCFWSMDESNTTKYAGQEVVFKCLGEGILEKAFQGYNACIFAYGQTGSGKSFSMMGHAEQLGLIPRLCCALFQRIALEQNESQTFKVEVSYMEIYNEKVRDLLDPKGSRQSLKVREHKVLGPYVDGLSQLAVTSFEDIESLMSEGNKSRTVAATNMNEESSRSHAVFNIIITQTLYDLQSGNSGEKVSKVSLVDLAGSERVSKTGAAGERLKEGSNINKSLTTLGLVISSLADQAAGKGKNKFVPYRDSVLTWLLKDNLGGNSQTSMIATISPAADNYEETLSTLRYADRAKRIVNHAVVNEDPNAKVIRELREEVEKLREQLSKAEAMKPPELKEKLEESEKLIKELTVTWEEKLRKTEAIAQERQRQLESMGISLETSGIKVGDDKCYLVNLNADPALNELLVYYLKDHTRVGADTSQDIQLFGIGIQPEHCEIDIAADGDITLTPKENARSCVNGTLVCNTTQLWHGDRILWGNNHFFRINLPKRKRRDWLKDFERETSSAEHDLDAASEASSEPDYNYEFAQMEVIMKTLNSNDPVQNVVQVLEKQYLEEKRTALEEQRLMYERELEQLRQQLSPERQPPSSASDRLAYSSQTAQQKVTQWAEERDELFRQSLAKLREQLVKANTLVREANFLAEEMSKLTDYQVTLQIPAANLSANRKRGAIVSEPAIQARRKGKGTQVWTIEKLENKLIDMRDLYQEWKENVPEAKRLYGKRGDPFYEAQENHNLIGVANVFLECLFCDVKLQYAVPIISQQGEVAGRLHVEVTRITGTIPERMAEDDSSENSSESGSLEVVDSSGEVIHRVKKLTCRVIIKEATGLPISLSNFVFCQYTFWDQCESTVAAPVVDPDVPSPQSKDAQYTVTFSHCKDYVVTVTEEFLEFISDGALAIEVWGHRCAGNGSPIWEVDSLHAKTRTLHDRWNEVTRRIEVWISILELNELGDYAAVELHQAKDVNTGGVFQLRQGHSRRVQVTVKPVQHSGTLPLMVEAILSVSIGCVTARSTKLQRGLDSYQEEDLNCVRERWSDALIKRREYLDEQIKKVSNKKEKTEDDMEREARLVEQWVGLTEERNAVLVPAPGSGIPGAPADWVPPPGMETHIPVLFLDLNADDLSANEQLVGPHASGVNSILPKEHGSQFFYLPIIKHSDDEVSATASWDSSVHDSLHLNRVTPQNERIYLIVKTTVQLSHPAAMELVLRKRIAANIYNKQSFTQSLKRRISLINICYSCGVTYEIVSNIPKATEEIEDRETLALLAARSENEGTLDGETYIEKYTRGVLQVENILSLERLRQAVTVKEALSTKARHIRRSLSTPNVHNVSSSRPDLSGFDEDDKGWPENQLDVSDYSSSYQDVACYGTLPRDSPRRSKEGCPSENPHALTVSPFKAFSPQPPKFFKPLMPVKEEHKKRLALEARPLLSQEDSEEEENELEALSRKLMLTQPYVPVEFADFSVYNASLENREWSSSKADLTDSRALEKAVSRSPTTSSLTSGYFSHSASNATLSDMAVPSSDSSDQLAVSTKEVECAEPPGPSLAPDVRRASNQELTEVGRGSGKDETIAVPLEENSALPKGTPSPQSIPEESSRMPCRTASCSELDVGPSKDGHQAREFCPGEVTIEHTTNILEDHSFTEFMGVSDGKDFDGLADCSVGEPSRRRALTNETDHKGIPERPPDADRLHPKIENDQEATATR.

A Kinesin motor domain is found at 5 to 352; it reads KVKVAVRVRP…LRYADRAKRI (348 aa). Position 102-109 (102-109) interacts with ATP; sequence GQTGSGKS. Residues 359–431 are a coiled coil; that stretch reads NEDPNAKVIR…QERQRQLESM (73 aa). An FHA domain is found at 469-519; sequence HTRVGADTSQDIQLFGIGIQPEHCEIDIAADGDITLTPKENARSCVNGTLV. Positions 552–775 form a coiled coil; it reads LKDFERETSS…VPEAKRLYGK (224 aa). Disordered stretches follow at residues 633–652 and 834–853; these read QQLS…LAYS and IPER…SGSL. A Phosphoserine modification is found at Ser636. Positions 1086–1126 form a coiled coil; that stretch reads SDALIKRREYLDEQIKKVSNKKEKTEDDMEREARLVEQWVG. A Phosphoserine modification is found at Ser1274. The segment covering 1370 to 1383 has biased composition (polar residues); it reads LSTPNVHNVSSSRP. Disordered regions lie at residues 1370–1402 and 1417–1436; these read LSTP…QLDV and TLPR…ENPH. A compositionally biased stretch (basic and acidic residues) spans 1421 to 1430; the sequence is DSPRRSKEGC. Phosphoserine occurs at positions 1441, 1477, 1481, 1524, 1600, and 1650. The stretch at 1475–1499 forms a coiled coil; it reads LLSQEDSEEEENELEALSRKLMLTQ. Disordered regions lie at residues 1584–1665 and 1698–1749; these read CAEP…GHQA and DFDG…TATR. Positions 1719–1741 are enriched in basic and acidic residues; that stretch reads ETDHKGIPERPPDADRLHPKIEN.

This sequence belongs to the TRAFAC class myosin-kinesin ATPase superfamily. Kinesin family. In terms of assembly, interacts with AP1G1 and AP1G2. Interacts with ZFYVE26. Interacts with AP2B1.

It is found in the golgi apparatus membrane. Its subcellular location is the cytoplasm. The protein localises to the cytoskeleton. It localises to the microtubule organizing center. The protein resides in the centrosome. It is found in the midbody. Its subcellular location is the endosome membrane. Functionally, plus end-directed microtubule-dependent motor protein involved in intracellular transport and regulating various processes such as mannose-6-phosphate receptor (M6PR) transport to the plasma membrane, endosomal sorting during melanosome biogenesis and cytokinesis. During melanosome maturation, required for delivering melanogenic enzymes from recycling endosomes to nascent melanosomes by creating peripheral recycling endosomal subdomains in melanocytes. Also required for the abscission step in cytokinesis: mediates translocation of ZFYVE26, and possibly TTC19, to the midbody during cytokinesis. Mediates the transport of M6PR-containing vesicles from trans-Golgi network to the plasma membrane via direct interaction with the AP-1 complex. The sequence is that of Kinesin-like protein KIF13A (Kif13a) from Mus musculus (Mouse).